A 424-amino-acid chain; its full sequence is UDP-sugar transporter protein SLC35A5 (424 aa).

Residues 1-8 are Cytoplasmic-facing; sequence MEKQCCSH. The helical transmembrane segment at 9–29 threads the bilayer; the sequence is PVICSLSTMYTFLLGAIFIAL. Over 30–53 the chain is Lumenal; the sequence is SSSRILLVKYSANEENKYDYLPTT. Residues 54-74 traverse the membrane as a helical segment; sequence VNVCSELVKLVFCVLVSFCVI. The Cytoplasmic segment spans residues 75-93; sequence KKDHQSRNLKYASWKEFSD. The helical transmembrane segment at 94–116 threads the bilayer; the sequence is FMKWSIPAFLYFLDNLIVFYVLS. At 117 to 119 the chain is on the lumenal side; that stretch reads YLQ. The chain crosses the membrane as a helical span at residues 120-142; it reads PAMAVIFSNFSIITTALLFRIVL. Residues 143 to 147 are Cytoplasmic-facing; that stretch reads KRRLN. The helical transmembrane segment at 148-168 threads the bilayer; the sequence is WIQWASLLTLFLSIVALTAGT. Topologically, residues 169–228 are lumenal; the sequence is KTLQHNLAGRGFHHDAFFSPSNSCLLFRSECPRKDNCTAKEWTFPEAKWNTTARVFSHIR. N-linked (GlcNAc...) asparagine glycosylation is present at Asn-204. The helical transmembrane segment at 229 to 249 threads the bilayer; the sequence is LGMGHVLIIVQCFISSMANIY. At 250–263 the chain is on the cytoplasmic side; that stretch reads NEKILKEGNQLTES. A helical transmembrane segment spans residues 264-284; sequence IFIQNSKLYFFGILFNGLTLG. Residues 285-303 are Lumenal-facing; the sequence is LQRSNRDQIKNCGFFYGHS. The helical transmembrane segment at 304 to 324 threads the bilayer; it reads AFSVALIFVTAFQGLSVAFIL. The Cytoplasmic portion of the chain corresponds to 325 to 330; it reads KFLDNM. A helical transmembrane segment spans residues 331–351; the sequence is FHVLMAQVTTVIITTVSVLVF. Topologically, residues 352–354 are lumenal; it reads DFR. The helical transmembrane segment at 355-375 threads the bilayer; that stretch reads PSLEFFLEAPSVLLSIFIYNA. Residues 376–424 are Cytoplasmic-facing; sequence SKPQVPEYAPRQERIRDLSGNLWERSSGDGEELERLTKPKSDESDEDTF. Phosphoserine occurs at positions 394, 416, and 419. The interval 397-424 is disordered; it reads LWERSSGDGEELERLTKPKSDESDEDTF. Residues 408-417 show a composition bias toward basic and acidic residues; that stretch reads LERLTKPKSD.

Belongs to the nucleotide-sugar transporter family. SLC35A subfamily. In terms of assembly, probably forms homooligomers and heterooligomers with SLC35A1, SLC35A2, SLC35A3 and SLC35A4.

It is found in the golgi apparatus membrane. The catalysed reaction is UMP(out) + UDP-alpha-D-glucuronate(in) = UMP(in) + UDP-alpha-D-glucuronate(out). The enzyme catalyses UMP(out) + UDP-N-acetyl-alpha-D-glucosamine(in) = UMP(in) + UDP-N-acetyl-alpha-D-glucosamine(out). It carries out the reaction UDP-N-acetyl-alpha-D-galactosamine(in) + UMP(out) = UDP-N-acetyl-alpha-D-galactosamine(out) + UMP(in). In terms of biological role, probable UDP-sugar:UMP transmembrane antiporter involved in UDP-alpha-D-glucuronate/UDP-GlcA, UDP-GlcNAc/UDP-N-acetyl-alpha-D-glucosamine and UDP-N-acetyl-alpha-D-galactosamine/UDP-GalNAc transport from the cytosol to the lumen of the Golgi. In Homo sapiens (Human), this protein is UDP-sugar transporter protein SLC35A5.